We begin with the raw amino-acid sequence, 68 residues long: DNA-directed RNA polymerase subunit omega (68 aa).

This sequence belongs to the RNA polymerase subunit omega family. The RNAP catalytic core consists of 2 alpha, 1 beta, 1 beta' and 1 omega subunit. When a sigma factor is associated with the core the holoenzyme is formed, which can initiate transcription.

It carries out the reaction RNA(n) + a ribonucleoside 5'-triphosphate = RNA(n+1) + diphosphate. Promotes RNA polymerase assembly. Latches the N- and C-terminal regions of the beta' subunit thereby facilitating its interaction with the beta and alpha subunits. The sequence is that of DNA-directed RNA polymerase subunit omega from Trichlorobacter lovleyi (strain ATCC BAA-1151 / DSM 17278 / SZ) (Geobacter lovleyi).